The chain runs to 158 residues: NAD(P)H-quinone oxidoreductase subunit J, chloroplastic (158 aa).

It belongs to the complex I 30 kDa subunit family. As to quaternary structure, NDH is composed of at least 16 different subunits, 5 of which are encoded in the nucleus.

The protein localises to the plastid. It is found in the chloroplast thylakoid membrane. The enzyme catalyses a plastoquinone + NADH + (n+1) H(+)(in) = a plastoquinol + NAD(+) + n H(+)(out). It carries out the reaction a plastoquinone + NADPH + (n+1) H(+)(in) = a plastoquinol + NADP(+) + n H(+)(out). Its function is as follows. NDH shuttles electrons from NAD(P)H:plastoquinone, via FMN and iron-sulfur (Fe-S) centers, to quinones in the photosynthetic chain and possibly in a chloroplast respiratory chain. The immediate electron acceptor for the enzyme in this species is believed to be plastoquinone. Couples the redox reaction to proton translocation, and thus conserves the redox energy in a proton gradient. The sequence is that of NAD(P)H-quinone oxidoreductase subunit J, chloroplastic from Trachelium caeruleum (Blue throatwort).